The primary structure comprises 1070 residues: DNA-directed RNA polymerase subunit beta (1070 aa).

Belongs to the RNA polymerase beta chain family. In plastids the minimal PEP RNA polymerase catalytic core is composed of four subunits: alpha, beta, beta', and beta''. When a (nuclear-encoded) sigma factor is associated with the core the holoenzyme is formed, which can initiate transcription.

The protein resides in the plastid. The enzyme catalyses RNA(n) + a ribonucleoside 5'-triphosphate = RNA(n+1) + diphosphate. Functionally, DNA-dependent RNA polymerase catalyzes the transcription of DNA into RNA using the four ribonucleoside triphosphates as substrates. The protein is DNA-directed RNA polymerase subunit beta of Cuscuta exaltata (Tall dodder).